We begin with the raw amino-acid sequence, 600 residues long: Intraflagellar transport protein 74 homolog (600 aa).

Positions 1–33 are disordered; that stretch reads MASNHKSSAARPVSRGGVGLTGRPPSGIRPLSG. The tract at residues 1–90 is basic region; sequence MASNHKSSAA…KTGTKGPQRQ (90 aa). Arg51 is subject to Omega-N-methylarginine. A Phosphothreonine modification is found at Thr73. Residues 98–482 are a coiled coil; that stretch reads LGLLRSKISE…KIKQMTTDLE (385 aa). The important for interaction with IFT27 stretch occupies residues 561 to 600; it reads EFIATKSQESDYQPIKKNVTKQIAEYNKTIVDALHSTSGN.

The protein belongs to the IFT74 family. Component of the IFT complex B, at least composed of IFT20, IFT22, IFT25, IFT27, IFT46, IFT52, TRAF3IP1/IFT54, IFT57, IFT74, IFT80, IFT81, and IFT88. Interacts with IFT81; the interaction is direct. Within the IFT complex B, IFT74 and IFT81 mediate the transport of tubulin within the cilium. Interacts (via basic region) with beta-tubulin (via acidic region); interaction is direct. Interacts with ARL13B and IFT88. Interacts (via the IFT74/IFT81 heterodimer) with RABL2B. Interacts with IFT57 and IFT70B. Highly expressed in adult and fetal kidney and expressed at lower level in adult heart, placenta, lung, liver and pancreas, and in fetal heart, lung and liver. Little to no expression was detected in adult brain and skeletal muscle or in fetal brain, thymus and spleen. Detected in sperm (at protein level).

It is found in the cell projection. The protein resides in the cilium. Its subcellular location is the cytoplasmic vesicle. It localises to the flagellum. The protein localises to the secretory vesicle. It is found in the acrosome. Component of the intraflagellar transport (IFT) complex B: together with IFT81, forms a tubulin-binding module that specifically mediates transport of tubulin within the cilium. Binds beta-tubulin via its basic region. Required for ciliogenesis. Essential for flagellogenesis during spermatogenesis. The chain is Intraflagellar transport protein 74 homolog (IFT74) from Homo sapiens (Human).